The primary structure comprises 1616 residues: MAYTQTATSSALLETIRGNNTLVNDLAKRRLYDTAVDEFNARDRRPKVNFSKVVSEEQTLIATKAYPEFQITFYNTQNAVHSLAGGLRSLELEYLMMQIPYGSLTYDIGGNFASHLFKGRAYVHCCMPNLDVRDIMRHEGQKDSIELYLSRLERGNKHVPNFQKEAFDRYAEMPNEVVCHDTFQTCGHSQECYTGRVYAIALHSIYDIPADEFGAALLRKNVHVCYAAFHFSENLLLEDSHVNLDEINACFQRDGDRLTFSFASESTLNYSHSYSNILKYVCKTYFPASNREVYMKEFLVTRVNTWFCKFSRIDTFLLYKGVAHKGVDSEQFYKAMEDAWHYKKTLAMCNSERILLEDSSSVNYWFPKMRDMVIVPLFDISLETSKRTRKEVLVLKDFVYTVLNHIRTYQAKALTYSNVLSFVESIRSRVIINGVTARSEWDVDKSLLQSLSMTFFLHIKLAVLKDDLLISKFALGPKTVSQHVWDEISLAFGNAFPSIKERLINRKLIKITENALEIRVPDLYVTFHDRLVSEYKMSVDMPVLDIRKKMEETEEMYNALSELSVLKNSDKFDVDVFSQMCQSLEVDPMTAAKVIVAVMSNESGLTLTFEQPTEANVALALQDSEKASDGALVVTSRDVEEPSIKGSMARGELQLAGLSGDVPESSYTRSEEIESLEQFHMATASSLIHKQMCSIVYTGPLKVQQMKNFIDSLVASLSAAVSNLVKILKDTAAIDLETRQKFGVLDVASKRWLVKPSAKNHAWGVVETHARKYHVALLEHDEFGIITCDNWRRVAVSPESVVYSDMAKLRTLRRLLKDGEPHVSSAKVVLVDGVPGCGKTKEILSRVNFEEDLILVPGRQAAEMIRRRANASGIIVATKDNVRTVDSFLMNYGKGARCQFKRLFIDEGLMLHTGCVNFLVEMSLSDIAYVYGDTQQIPYINRVTGFPYPAHFAKLEVDEVETRRTTLRCPADVTHFLNQRYEGHVMCTSSEKKSVSQEMVSGAASINPVSKPLKGKILTFTQSDKEALLSRGYTDVHTVHEVQGETYADVSLVRLTPTPVSIIARDSPHVLVSLSRHTKSLKYYTVVMDPLVSIIRDLERVSSYLLDMYKVDAGTQXQLQVDSVFKNFNLFVATPKTGDISDMQFYYDKCLPGNSTLLNNYDAVTMKLTDISLNVKDCILDMSKSVAAPKDAKPTLIPMVRTAAEMPRQTGLLENLVAMIKRNFNSPELSGVVDIENTASLVVDKFFDSYLLKEKRKPNKNFSLFSRESLNRWIAKQEQVTIGQLADFDFVDLPAVDQYRHMIKAQPKQKLDLSIQTEYPALQTIVYHSKKINAIFGPLFSELTRQLLDSIDSSRFLFFTRKTPAQIEDFFGDLDSHVPMDVLELDVSKYDKSQNEFHCAVEYEIWRRLGLEDFLAEVWKQGHRKTTLKDYTAGIKTCLWYQRKSGDVTTFIGNTVIIASCLASMLPMEKLIKGAFCGDDSLLYFPKGCEYPDIQQAANLMWNFEAKLFKKQYGYFCGRYVIHHDRGCIVYYDPLKLISKLGAKHIKDWDHLEEFRRSLCNVAESLNNCAYYTQLDDAVGEVHKTAPPGSFVYKSLVKYLSDKVLFRSLFLDGSSC.

A methyltransferase region spans residues 50-441 (FSKVVSEEQT…INGVTARSEW (392 aa)). Residues 72–281 (TFYNTQNAVH…HSYSNILKYV (210 aa)) enclose the Alphavirus-like MT domain. In terms of domain architecture, (+)RNA virus helicase ATP-binding spans 801 to 963 (VVYSDMAKLR…KLEVDEVETR (163 aa)). Positions 830–1085 (LVDGVPGCGK…RHTKSLKYYT (256 aa)) are helicase. 833-840 (GVPGCGKT) serves as a coordination point for ATP. The (+)RNA virus helicase C-terminal domain maps to 964-1116 (RTTLRCPADV…DMYKVDAGTQ (153 aa)). The 114-residue stretch at 1380–1493 (MDVLELDVSK…YFPKGCEYPD (114 aa)) folds into the RdRp catalytic domain.

The protein belongs to the ssRNA positive-strand viruses RNA-directed RNA polymerase family. As to quaternary structure, heterodimer of a large and a small subunit.

It catalyses the reaction RNA(n) + a ribonucleoside 5'-triphosphate = RNA(n+1) + diphosphate. The enzyme catalyses ATP + H2O = ADP + phosphate + H(+). In terms of biological role, is an RNA-dependent RNA polymerase active in viral RNA replication. Functionally, is a methyltransferase active in RNA capping and an RNA helicase. Methyltransferase displays a cytoplasmic capping enzyme activity. This function is necessary since all viral RNAs are synthesized in the cytoplasm, and host capping enzymes are restricted to the nucleus. Helicase region probably exhibits NTPase and RNA unwinding activities (Potential). It also acts as a suppressor of RNA-mediated gene silencing, also known as post-transcriptional gene silencing (PTGS), a mechanism of plant viral defense that limits the accumulation of viral RNAs. May mediate silencing suppression through either inhibition of HEN1-mediated siRNA or siRNA demethylation. This Antirrhinum majus (Garden snapdragon) protein is Replicase large subunit.